Here is a 218-residue protein sequence, read N- to C-terminus: 3-dehydroquinate dehydratase (218 aa).

Residues 29 to 31 (EFR) and Arg56 contribute to the 3-dehydroquinate site. His116 serves as the catalytic Proton donor/acceptor. Residue Lys142 is the Schiff-base intermediate with substrate of the active site. The 3-dehydroquinate site is built by Arg180, Ser200, and Gln204.

It belongs to the type-I 3-dehydroquinase family. In terms of assembly, homodimer.

The enzyme catalyses 3-dehydroquinate = 3-dehydroshikimate + H2O. It functions in the pathway metabolic intermediate biosynthesis; chorismate biosynthesis; chorismate from D-erythrose 4-phosphate and phosphoenolpyruvate: step 3/7. In terms of biological role, involved in the third step of the chorismate pathway, which leads to the biosynthesis of aromatic amino acids. Catalyzes the cis-dehydration of 3-dehydroquinate (DHQ) and introduces the first double bond of the aromatic ring to yield 3-dehydroshikimate. In Methanococcus maripaludis (strain DSM 14266 / JCM 13030 / NBRC 101832 / S2 / LL), this protein is 3-dehydroquinate dehydratase.